The following is a 231-amino-acid chain: Large ribosomal subunit protein uL1 (231 aa).

The protein belongs to the universal ribosomal protein uL1 family. Part of the 50S ribosomal subunit.

In terms of biological role, binds directly to 23S rRNA. The L1 stalk is quite mobile in the ribosome, and is involved in E site tRNA release. Its function is as follows. Protein L1 is also a translational repressor protein, it controls the translation of the L11 operon by binding to its mRNA. This chain is Large ribosomal subunit protein uL1, found in Saccharophagus degradans (strain 2-40 / ATCC 43961 / DSM 17024).